We begin with the raw amino-acid sequence, 514 residues long: Alanine--glyoxylate aminotransferase 2, mitochondrial (514 aa).

The N-terminal 41 residues, 1–41 (MTLIWRHLLRPLCLVTSAPRILEMHPFLSLGTSRTSVTKLS), are a transit peptide targeting the mitochondrion. The residue at position 71 (Lys-71) is an N6-acetyllysine; alternate. Lys-71 bears the N6-succinyllysine; alternate mark. Lys-84 carries the post-translational modification N6-acetyllysine. Lys-262 is subject to N6-acetyllysine; alternate. Lys-262 is subject to N6-succinyllysine; alternate. Lys-304 bears the N6-succinyllysine mark. An N6-(pyridoxal phosphate)lysine modification is found at Lys-350. N6-acetyllysine; alternate occurs at positions 417 and 420. An N6-succinyllysine; alternate mark is found at Lys-417 and Lys-420.

Belongs to the class-III pyridoxal-phosphate-dependent aminotransferase family. As to quaternary structure, homotetramer. Pyridoxal 5'-phosphate is required as a cofactor. Expressed in the convoluted tubule in the kidney and in the liver hepatocytes (at protein level).

It is found in the mitochondrion. It catalyses the reaction glyoxylate + L-alanine = glycine + pyruvate. It carries out the reaction (R)-3-amino-2-methylpropanoate + pyruvate = 2-methyl-3-oxopropanoate + L-alanine. The catalysed reaction is 3-oxopropanoate + L-alanine = beta-alanine + pyruvate. The enzyme catalyses 2-oxobutanoate + L-alanine = (2S)-2-aminobutanoate + pyruvate. It catalyses the reaction N(omega),N(omega)-dimethyl-L-arginine + pyruvate = 5-(3,3-dimethylguanidino)-2-oxopentanoate + L-alanine. It carries out the reaction N(omega),N('omega)-dimethyl-L-arginine + pyruvate = 5-(3,3'-dimethylguanidino)-2-oxopentanoate + L-alanine. The catalysed reaction is N(omega),N(omega)-dimethyl-L-arginine + glyoxylate = 5-(3,3-dimethylguanidino)-2-oxopentanoate + glycine. The enzyme catalyses N(omega),N('omega)-dimethyl-L-arginine + glyoxylate = 5-(3,3'-dimethylguanidino)-2-oxopentanoate + glycine. It catalyses the reaction N(omega)-methyl-L-arginine + pyruvate = 5-(3-methylguanidino)-2-oxopentanoate + L-alanine. It carries out the reaction N(omega)-methyl-L-arginine + glyoxylate = 5-(3-methylguanidino)-2-oxopentanoate + glycine. The catalysed reaction is L-ornithine + pyruvate = 5-amino-2-oxopentanoate + L-alanine. The enzyme catalyses L-ornithine + glyoxylate = 5-amino-2-oxopentanoate + glycine. It catalyses the reaction (2S)-2-aminobutanoate + glyoxylate = 2-oxobutanoate + glycine. It carries out the reaction N(omega),N(omega)-dimethyl-L-arginine + oxaloacetate = 5-(3,3-dimethylguanidino)-2-oxopentanoate + L-aspartate. The catalysed reaction is oxaloacetate + L-alanine = L-aspartate + pyruvate. The enzyme catalyses N(omega),N(omega)-dimethyl-L-arginine + 2-oxobutanoate = 5-(3,3-dimethylguanidino)-2-oxopentanoate + (2S)-2-aminobutanoate. It catalyses the reaction 2-oxopentanoate + N(omega),N(omega)-dimethyl-L-arginine = 5-(3,3-dimethylguanidino)-2-oxopentanoate + L-2-aminopentanoate. It carries out the reaction 2-oxohexanoate + N(omega),N(omega)-dimethyl-L-arginine = L-2-aminohexanoate + 5-(3,3-dimethylguanidino)-2-oxopentanoate. In terms of biological role, multifunctional aminotransferase with a broad substrate specificity. Catalyzes the conversion of glyoxylate to glycine using alanine as the amino donor. Catalyzes metabolism of not L- but the D-isomer of D-beta-aminoisobutyric acid to generate 2-methyl-3-oxopropanoate and alanine. Catalyzes the transfer of the amino group from beta-alanine to pyruvate to yield L-alanine and 3-oxopropanoate. Can metabolize NG-monomethyl-L-arginine (NMMA), asymmetric NG,NG-dimethyl-L-arginine (ADMA) and symmetric NG,N'G-dimethyl-L-arginine (SDMA). ADMA is a potent inhibitor of nitric-oxide (NO) synthase, and this activity provides mechanism through which the kidney regulates blood pressure. This is Alanine--glyoxylate aminotransferase 2, mitochondrial (AGXT2) from Homo sapiens (Human).